Consider the following 188-residue polypeptide: Elongation factor P (188 aa).

The protein belongs to the elongation factor P family.

It is found in the cytoplasm. It participates in protein biosynthesis; polypeptide chain elongation. Involved in peptide bond synthesis. Stimulates efficient translation and peptide-bond synthesis on native or reconstituted 70S ribosomes in vitro. Probably functions indirectly by altering the affinity of the ribosome for aminoacyl-tRNA, thus increasing their reactivity as acceptors for peptidyl transferase. The polypeptide is Elongation factor P (Cellvibrio japonicus (strain Ueda107) (Pseudomonas fluorescens subsp. cellulosa)).